A 276-amino-acid polypeptide reads, in one-letter code: Eukaryotic translation initiation factor 3 subunit G (276 aa).

Phosphoserine is present on Ser-148. In terms of domain architecture, RRM spans 195–274 (TTLKISQLNS…LILHLEWSKK (80 aa)).

Belongs to the eIF-3 subunit G family. As to quaternary structure, component of the eukaryotic translation initiation factor 3 (eIF-3) complex.

The protein localises to the cytoplasm. In terms of biological role, RNA-binding component of the eukaryotic translation initiation factor 3 (eIF-3) complex, which is involved in protein synthesis of a specialized repertoire of mRNAs and, together with other initiation factors, stimulates binding of mRNA and methionyl-tRNAi to the 40S ribosome. The eIF-3 complex specifically targets and initiates translation of a subset of mRNAs involved in cell proliferation. This subunit can bind 18S rRNA. The polypeptide is Eukaryotic translation initiation factor 3 subunit G (Debaryomyces hansenii (strain ATCC 36239 / CBS 767 / BCRC 21394 / JCM 1990 / NBRC 0083 / IGC 2968) (Yeast)).